Here is a 131-residue protein sequence, read N- to C-terminus: Profilin-8 (131 aa).

Cysteine 13 and cysteine 115 are disulfide-bonded. The Involved in PIP2 interaction motif lies at 81 to 97 (AVIRGKKGSGGITVKKT). A Phosphothreonine modification is found at threonine 111.

It belongs to the profilin family. In terms of assembly, occurs in many kinds of cells as a complex with monomeric actin in a 1:1 ratio. Phosphorylated by MAP kinases.

It is found in the cytoplasm. It localises to the cytoskeleton. In terms of biological role, binds to actin and affects the structure of the cytoskeleton. At high concentrations, profilin prevents the polymerization of actin, whereas it enhances it at low concentrations. In Zea mays (Maize), this protein is Profilin-8.